A 181-amino-acid polypeptide reads, in one-letter code: Regulator of G-protein signaling 5 (181 aa).

The region spanning 64-180 (SLDKLLQNNY…VRSEFYQEFI (117 aa)) is the RGS domain.

It is found in the cytoplasm. Its subcellular location is the membrane. In terms of biological role, inhibits signal transduction by increasing the GTPase activity of G protein alpha subunits thereby driving them into their inactive GDP-bound form. Binds to G(i)-alpha and G(o)-alpha, but not to G(s)-alpha. In Bos taurus (Bovine), this protein is Regulator of G-protein signaling 5 (RGS5).